Here is a 109-residue protein sequence, read N- to C-terminus: uncharacterized protein (109 aa).

Helical transmembrane passes span 18–38 and 48–68; these read TTLAWTRTAFALLVNGVLLTL and AGLIPAGLAGAAASCCYVIAL.

It localises to the cell membrane. This is an uncharacterized protein from Mycobacterium tuberculosis (strain CDC 1551 / Oshkosh).